Consider the following 318-residue polypeptide: N-acyl-aromatic-L-amino acid amidohydrolase (carboxylate-forming) (318 aa).

The tract at residues 1-210 (MSSLPGSREP…ILDFIELFNQ (210 aa)) is hydrolytic domain. Residues histidine 21 and glutamate 24 each coordinate Zn(2+). Residues arginine 63 and 70 to 71 (NR) each bind substrate. Histidine 116 is a binding site for Zn(2+). Positions 177 and 287 each coordinate substrate. The shielding domain stretch occupies residues 211–318 (GMDLPAFEMD…RLTPRSTQTP (108 aa)). Threonine 317 carries the phosphothreonine modification.

This sequence belongs to the AspA/AstE family. Aspartoacylase subfamily. As to quaternary structure, exists as a mixture of homodimers and homotetramer, both catalytically active. Zn(2+) serves as cofactor. In terms of tissue distribution, expressed predominantly in kidney and to a lesser extent in liver. Weakly expressed in heart, small intestine, brain, lung, testis, and stomach.

It is found in the apical cell membrane. The protein resides in the cytoplasm. The enzyme catalyses an N-acyl-aromatic L-alpha-amino acid + H2O = an aromatic L-alpha-amino acid + a carboxylate. The catalysed reaction is an N-acetyl-L-cysteine-S-conjugate + H2O = an S-substituted L-cysteine + acetate. Its function is as follows. Plays an important role in deacetylating mercapturic acids in kidney proximal tubules. Also acts on N-acetyl-aromatic amino acids. The protein is N-acyl-aromatic-L-amino acid amidohydrolase (carboxylate-forming) (Acy3) of Mus musculus (Mouse).